Here is a 639-residue protein sequence, read N- to C-terminus: Threonine--tRNA ligase (639 aa).

The region spanning 1–61 is the TGS domain; it reads MIHITLPDGS…TQDSPLSIVT (61 aa). The catalytic stretch occupies residues 242–533; the sequence is DHRKLGRELD…LIEEHAGALP (292 aa). Zn(2+)-binding residues include Cys-333, His-384, and His-510.

This sequence belongs to the class-II aminoacyl-tRNA synthetase family. In terms of assembly, homodimer. Zn(2+) serves as cofactor.

The protein localises to the cytoplasm. The catalysed reaction is tRNA(Thr) + L-threonine + ATP = L-threonyl-tRNA(Thr) + AMP + diphosphate + H(+). Its function is as follows. Catalyzes the attachment of threonine to tRNA(Thr) in a two-step reaction: L-threonine is first activated by ATP to form Thr-AMP and then transferred to the acceptor end of tRNA(Thr). Also edits incorrectly charged L-seryl-tRNA(Thr). This chain is Threonine--tRNA ligase, found in Acidovorax sp. (strain JS42).